A 307-amino-acid chain; its full sequence is UDP-N-acetylenolpyruvoylglucosamine reductase (307 aa).

Positions Leu34–Ala198 constitute an FAD-binding PCMH-type domain. The active site involves Arg177. Ser227 (proton donor) is an active-site residue. Glu297 is a catalytic residue.

The protein belongs to the MurB family. FAD is required as a cofactor.

The protein resides in the cytoplasm. The enzyme catalyses UDP-N-acetyl-alpha-D-muramate + NADP(+) = UDP-N-acetyl-3-O-(1-carboxyvinyl)-alpha-D-glucosamine + NADPH + H(+). It functions in the pathway cell wall biogenesis; peptidoglycan biosynthesis. Functionally, cell wall formation. This Oceanobacillus iheyensis (strain DSM 14371 / CIP 107618 / JCM 11309 / KCTC 3954 / HTE831) protein is UDP-N-acetylenolpyruvoylglucosamine reductase.